Consider the following 170-residue polypeptide: Transcriptional repressor NrdR (170 aa).

The segment at 3–34 (CPFCRHPDSRVVDSRTTDDGTSIRRRRQCPDC) is a zinc-finger region. Residues 46–136 (LMVVKRSGVT…VYRAFDSLED (91 aa)) enclose the ATP-cone domain. Positions 148 to 170 (RPSAEDRGSGETLEVPAPAIAAD) are disordered.

Belongs to the NrdR family. Zn(2+) serves as cofactor.

In terms of biological role, negatively regulates transcription of bacterial ribonucleotide reductase nrd genes and operons by binding to NrdR-boxes. The sequence is that of Transcriptional repressor NrdR from Streptomyces griseus subsp. griseus (strain JCM 4626 / CBS 651.72 / NBRC 13350 / KCC S-0626 / ISP 5235).